Consider the following 714-residue polypeptide: Protein HAPLESS 2-B (714 aa).

Positions 1–33 are cleaved as a signal peptide; sequence MAPRRRRRAARSSRPLLLALLAAAVNNFAPAGG. Residues 34 to 552 lie on the Extracellular side of the membrane; that stretch reads VEVLAKSRLE…FFTGTTCSTR (519 aa). Intrachain disulfides connect Cys-45–Cys-59, Cys-134–Cys-164, Cys-146–Cys-194, Cys-165–Cys-321, Cys-167–Cys-177, Cys-304–Cys-328, and Cys-441–Cys-479. The helical transmembrane segment at 553–573 threads the bilayer; sequence CWSFLKFVIHGLLLVAVLWLL. At 574–714 the chain is on the cytoplasmic side; sequence HRKGLFDPLY…HGDRRHHAWH (141 aa). Positions 597–619 are disordered; the sequence is RARRRHKRAHSHRHSHHHDAHKR. Over residues 598–619 the composition is skewed to basic residues; sequence ARRRHKRAHSHRHSHHHDAHKR.

It belongs to the HAP2/GCS1 family.

The protein localises to the endoplasmic reticulum membrane. The protein resides in the cell membrane. In terms of biological role, required for male fertility. Plays a role in pollen tube guidance and successful gamete attachment. Essential for the fusion of gametes during double fertilization, where one male gamete fuses with the egg to produce a zygote, and another male gamete fuses with the central cell to produce the endosperm. Mediates the fusion of cell membranes. Not required for pollen tube outgrowth. This is Protein HAPLESS 2-B (HAP2B) from Oryza sativa subsp. japonica (Rice).